Reading from the N-terminus, the 102-residue chain is Small ribosomal subunit protein uS10 (102 aa).

It belongs to the universal ribosomal protein uS10 family. In terms of assembly, part of the 30S ribosomal subunit.

Involved in the binding of tRNA to the ribosomes. This chain is Small ribosomal subunit protein uS10, found in Methanothermobacter thermautotrophicus (strain ATCC 29096 / DSM 1053 / JCM 10044 / NBRC 100330 / Delta H) (Methanobacterium thermoautotrophicum).